A 67-amino-acid polypeptide reads, in one-letter code: Large ribosomal subunit protein uL29 (67 aa).

The protein belongs to the universal ribosomal protein uL29 family.

This is Large ribosomal subunit protein uL29 from Alkaliphilus oremlandii (strain OhILAs) (Clostridium oremlandii (strain OhILAs)).